A 559-amino-acid chain; its full sequence is Terpene synthase 1 (559 aa).

D312, D316, D456, and E464 together coordinate Mg(2+). The short motif at D312–D316 is the DDXXD motif element.

This sequence belongs to the terpene synthase family. Tpsa subfamily. It depends on Mg(2+) as a cofactor. Mn(2+) is required as a cofactor. As to expression, mostly expressed in stems and, to a lower extent, in leaves, roots and fruits.

It catalyses the reaction (2E,6E)-farnesyl diphosphate = (-)-(E)-beta-caryophyllene + diphosphate. The enzyme catalyses (2E,6E)-farnesyl diphosphate = alpha-humulene + diphosphate. The protein operates within secondary metabolite biosynthesis; terpenoid biosynthesis. Its function is as follows. Sesquiterpene synthase involved in the biosynthesis of volatile compounds that contribute to the characteristic flavors of black pepper. Mediates the conversion of (2E,6E)-farnesyl diphosphate (FPP) into beta-caryophyllene and, as a minor compound, into alpha-humulene. This chain is Terpene synthase 1, found in Piper nigrum (Black pepper).